Reading from the N-terminus, the 520-residue chain is Amine oxidase [flavin-containing] B (520 aa).

The residue at position 2 (S2) is an N-acetylserine. At 2-489 (SNKCDVVVVG…TFLERHLPSV (488 aa)) the chain is on the cytoplasmic side. K52 is subject to N6-acetyllysine. C397 bears the S-8alpha-FAD cysteine mark. A helical; Anchor for type IV membrane protein membrane pass occupies residues 490–516 (PGLLRLIGLTTIFSATALGFLAHKRGL). At 517-520 (LVRV) the chain is on the mitochondrial intermembrane side.

Monomer, homo- or heterodimer (containing two subunits of similar size). Each subunit contains a covalently bound flavin. Enzymatically active as monomer. Requires FAD as cofactor.

It localises to the mitochondrion outer membrane. It carries out the reaction a secondary aliphatic amine + O2 + H2O = a primary amine + an aldehyde + H2O2. The enzyme catalyses (R)-adrenaline + O2 + H2O = (R)-3,4-dihydroxymandelaldehyde + methylamine + H2O2. It catalyses the reaction a primary methyl amine + O2 + H2O = an aldehyde + H2O2 + NH4(+). The catalysed reaction is benzylamine + O2 + H2O = benzaldehyde + H2O2 + NH4(+). It carries out the reaction dopamine + O2 + H2O = 3,4-dihydroxyphenylacetaldehyde + H2O2 + NH4(+). The enzyme catalyses tyramine + O2 + H2O = (4-hydroxyphenyl)acetaldehyde + H2O2 + NH4(+). It catalyses the reaction (R)-noradrenaline + O2 + H2O = (R)-3,4-dihydroxymandelaldehyde + H2O2 + NH4(+). The catalysed reaction is 2-phenylethylamine + O2 + H2O = 2-phenylacetaldehyde + H2O2 + NH4(+). It carries out the reaction N-acetylputrescine + O2 + H2O = 4-acetamidobutanal + H2O2 + NH4(+). Its activity is regulated as follows. Inhibited by deprenyl. Functionally, catalyzes the oxidative deamination of primary and some secondary amines such as neurotransmitters, and exogenous amines including the tertiary amine, neurotoxin 1-methyl-4-phenyl-1,2,3,6-tetrahydropyridine (MPTP), with concomitant reduction of oxygen to hydrogen peroxide and participates in the metabolism of neuroactive and vasoactive amines in the central nervous system and peripheral tissues. Preferentially degrades benzylamine and phenylethylamine. The chain is Amine oxidase [flavin-containing] B from Homo sapiens (Human).